The sequence spans 106 residues: 3-oxoacyl-[acyl-carrier-protein] reductase (106 aa).

Belongs to the short-chain dehydrogenases/reductases (SDR) family. In terms of assembly, homotetramer. As to expression, mesocarp.

Its subcellular location is the plastid. The protein resides in the chloroplast. The enzyme catalyses a (3R)-hydroxyacyl-[ACP] + NADP(+) = a 3-oxoacyl-[ACP] + NADPH + H(+). Its pathway is lipid metabolism; fatty acid biosynthesis. The chain is 3-oxoacyl-[acyl-carrier-protein] reductase from Persea americana (Avocado).